The sequence spans 195 residues: uncharacterized protein (195 aa).

Residues Glu-10–Gln-70 form the HTH tetR-type domain. Residues Ser-33 to Phe-52 constitute a DNA-binding region (H-T-H motif).

This is an uncharacterized protein from Mycobacterium tuberculosis (strain CDC 1551 / Oshkosh).